A 223-amino-acid polypeptide reads, in one-letter code: Cytidylate kinase (223 aa).

13 to 21 (GPSASGKGT) contacts ATP.

The protein belongs to the cytidylate kinase family. Type 1 subfamily.

It is found in the cytoplasm. The enzyme catalyses CMP + ATP = CDP + ADP. It catalyses the reaction dCMP + ATP = dCDP + ADP. The chain is Cytidylate kinase from Nitrosomonas europaea (strain ATCC 19718 / CIP 103999 / KCTC 2705 / NBRC 14298).